The primary structure comprises 421 residues: Signal recognition particle receptor FtsY (421 aa).

Over residues 1 to 10 (MFSFFRRKKK) the composition is skewed to basic residues. Residues 1–31 (MFSFFRRKKKQETPALEEAQIQETAAKAESE) form a disordered region. GTP-binding positions include 228-235 (GINGAGKT), 309-313 (DTAGR), and 373-376 (TKLD).

This sequence belongs to the GTP-binding SRP family. FtsY subfamily. As to quaternary structure, part of the signal recognition particle protein translocation system, which is composed of SRP and FtsY. SRP is a ribonucleoprotein composed of Ffh and a 4.5S RNA molecule.

The protein localises to the cell inner membrane. It is found in the cytoplasm. It catalyses the reaction GTP + H2O = GDP + phosphate + H(+). Its function is as follows. Involved in targeting and insertion of nascent membrane proteins into the cytoplasmic membrane. Acts as a receptor for the complex formed by the signal recognition particle (SRP) and the ribosome-nascent chain (RNC). Interaction with SRP-RNC leads to the transfer of the RNC complex to the Sec translocase for insertion into the membrane, the hydrolysis of GTP by both Ffh and FtsY, and the dissociation of the SRP-FtsY complex into the individual components. The chain is Signal recognition particle receptor FtsY from Neisseria meningitidis serogroup A / serotype 4A (strain DSM 15465 / Z2491).